A 115-amino-acid polypeptide reads, in one-letter code: Mediator of RNA polymerase II transcription subunit 22 (115 aa).

The protein belongs to the Mediator complex subunit 22 family. As to quaternary structure, component of the Mediator complex.

It is found in the nucleus. In terms of biological role, component of the Mediator complex, a coactivator involved in the regulated transcription of nearly all RNA polymerase II-dependent genes. Mediator functions as a bridge to convey information from gene-specific regulatory proteins to the basal RNA polymerase II transcription machinery. Mediator is recruited to promoters by direct interactions with regulatory proteins and serves as a scaffold for the assembly of a functional preinitiation complex with RNA polymerase II and the general transcription factors. The sequence is that of Mediator of RNA polymerase II transcription subunit 22 (SRB6) from Candida albicans (strain SC5314 / ATCC MYA-2876) (Yeast).